A 477-amino-acid chain; its full sequence is Tripartite motif-containing protein 72 (477 aa).

Positions 14, 17, 29, 31, 34, 37, 53, 56, 86, 89, 97, 100, 105, 108, 114, and 117 each coordinate Zn(2+). Residues Cys-14 to Gln-57 form an RING-type zinc finger. The B box-type zinc-finger motif lies at Val-81–Ala-122. A coiled-coil region spans residues Gln-135–Lys-232. Cys-144 carries the post-translational modification S-nitrosocysteine. Ser-255 carries the phosphoserine modification. A B30.2/SPRY domain is found at Asp-271–Ala-475.

The protein belongs to the TRIM/RBCC family. In terms of assembly, homodimer. Homooligomer; disulfide-linked. Oligomerizes on the phospholipid membrane. Interacts with DYSF and CAV3. In terms of processing, disulfide bond formation at Cys-242 occurs in case of membrane damage that cause the entry of the oxidized milieu of the extracellular space, resulting in homooligomerization. S-nitrosylation at Cys-144 stabilizes TRIM72 and protects against oxidation-induced protein degradation and cell death.

It is found in the cell membrane. It localises to the sarcolemma. The protein localises to the cytoplasmic vesicle membrane. It carries out the reaction S-ubiquitinyl-[E2 ubiquitin-conjugating enzyme]-L-cysteine + [acceptor protein]-L-lysine = [E2 ubiquitin-conjugating enzyme]-L-cysteine + N(6)-ubiquitinyl-[acceptor protein]-L-lysine.. It participates in protein modification; protein ubiquitination. With respect to regulation, specifically binds phosphatidylserine. The binding to phospholipids enhances ubiquitination activity. In terms of biological role, muscle-specific E3 ubiquitin-protein ligase that plays a central role in cell membrane repair by nucleating the assembly of the repair machinery at injury sites. Its ubiquitination activity is mediated by E2 ubiquitin-conjugating enzymes UBE2D1, UBE2D2 and UBE2D3. Acts as a sensor of oxidation: upon membrane damage, entry of extracellular oxidative environment results in disulfide bond formation and homooligomerization at the injury site. This oligomerization acts as a nucleation site for recruitment of TRIM72-containing vesicles to the injury site, leading to membrane patch formation. Probably acts upstream of the Ca(2+)-dependent membrane resealing process. Required for transport of DYSF to sites of cell injury during repair patch formation. Regulates membrane budding and exocytosis. May be involved in the regulation of the mobility of KCNB1-containing endocytic vesicles. This is Tripartite motif-containing protein 72 from Homo sapiens (Human).